Here is a 418-residue protein sequence, read N- to C-terminus: Nuclear receptor coactivator 6 (418 aa).

Disordered stretches follow at residues Glu-1–Ser-21 and Pro-77–Asp-98. Residues Glu-1–Gln-215 are TBP/GTF2A-binding region. A CREBBP-binding region region spans residues Glu-1 to Pro-352. The tract at residues Glu-1–Ser-418 is NCOA1-binding region. An NCOA6IP-binding region region spans residues Val-60–His-214. Polar residues predominate over residues Met-84–Asp-98. Phosphoserine is present on Ser-171. Positions Leu-174–Leu-178 match the LXXLL motif motif. A disordered region spans residues His-186–Ser-418. Positions Asn-190–Asn-199 are enriched in low complexity. Over residues Lys-200–Asn-212 the composition is skewed to basic residues. Residues Pro-269 to Gln-279 are compositionally biased toward low complexity. Residues Ala-282 to Gln-310 are compositionally biased toward pro residues. Residues Pro-311–Gln-336 show a composition bias toward low complexity. 2 positions are modified to asymmetric dimethylarginine: Arg-342 and Arg-353. Residues Pro-358–Asn-370 show a composition bias toward polar residues. The residue at position 391 (Arg-391) is an Asymmetric dimethylarginine. A compositionally biased stretch (polar residues) spans Pro-399–Ser-418.

As to quaternary structure, monomer and homodimer. Interacts in vitro with the basal transcription factors GTF2A and TBP, suggesting an autonomous transactivation function. Interacts with NCOA1, CRSP3, RBM14, the histone acetyltransferase proteins EP300 and CREBBP, and with methyltransferase proteins NCOA6IP and PRMT2. Component of the MLL2/3 complex (also named ASCOM complex), at least composed of KMT2D/MLL2 or KMT2C/MLL3, ASH2L, RBBP5, WDR5, NCOA6, DPY30, KDM6A, PAXIP1/PTIP, PAGR1 and alpha- and beta-tubulin. Interacts with ZNF335; may enhance ligand-dependent transcriptional activation by nuclear hormone receptors. Post-translationally, phosphorylated.

It localises to the nucleus. Functionally, nuclear receptor coactivator that directly binds nuclear receptors and stimulates the transcriptional activities in a hormone-dependent fashion. Coactivate expression in an agonist- and AF2-dependent manner. May coactivate expression via a remodeling of chromatin and its interaction with histone acetyltransferase proteins. Involved in the coactivation of different nuclear receptors, such as for steroids (GR and ERs), retinoids (RARs and RXRs), thyroid hormone (TRs), vitamin D3 (VDR) and prostanoids (PPARs). Probably functions as a general coactivator, rather than just a nuclear receptor coactivator. May also be involved in the coactivation of the NF-kappa-B pathway. The chain is Nuclear receptor coactivator 6 (Ncoa6) from Rattus norvegicus (Rat).